Reading from the N-terminus, the 287-residue chain is MMKNILAIQSHVVYGHAGNSAAEFPMRRLGANVWPLNTVQFSNHTQYGKWTGCVMPPSHLTEIVQGIAAIDKLHTCDAVLSGYLGSAEQGEHILGIVRQVKAANPQAKYFCDPVMGHPEKGCIVAPGVAEFHVRHGLPASDIIAPNLVELEILCEHPVKNVEEAVLAARELIAQGPQIVLVKHLARAGYSRDRFEMLLVTADEAWHISRPLVDFGMRQPVGVGDVTSGLLLVKLLQGATLQEALEHVTAAVYEIMVTTKAMQEYELQVVAAQDRIANPEHYFSATKL.

Residues Ser-10 and 45–46 contribute to the substrate site; that span reads TQ. Residues Asp-112, Ala-144, Glu-149, Lys-182, and 209-212 each bind ATP; that span reads RPLV. Substrate is bound at residue Asp-224.

This sequence belongs to the pyridoxine kinase family. PdxY subfamily. Homodimer. It depends on Mg(2+) as a cofactor.

The catalysed reaction is pyridoxal + ATP = pyridoxal 5'-phosphate + ADP + H(+). Its pathway is cofactor metabolism; pyridoxal 5'-phosphate salvage; pyridoxal 5'-phosphate from pyridoxal: step 1/1. In terms of biological role, pyridoxal kinase involved in the salvage pathway of pyridoxal 5'-phosphate (PLP). Catalyzes the phosphorylation of pyridoxal to PLP. This Escherichia coli O6:H1 (strain CFT073 / ATCC 700928 / UPEC) protein is Pyridoxal kinase PdxY.